The sequence spans 152 residues: Deoxyuridine 5'-triphosphate nucleotidohydrolase (152 aa).

Substrate is bound by residues 70 to 72 (RSG), Asn83, 87 to 89 (LID), and Met97.

This sequence belongs to the dUTPase family. Mg(2+) is required as a cofactor.

The catalysed reaction is dUTP + H2O = dUMP + diphosphate + H(+). Its pathway is pyrimidine metabolism; dUMP biosynthesis; dUMP from dCTP (dUTP route): step 2/2. Its function is as follows. This enzyme is involved in nucleotide metabolism: it produces dUMP, the immediate precursor of thymidine nucleotides and it decreases the intracellular concentration of dUTP so that uracil cannot be incorporated into DNA. The sequence is that of Deoxyuridine 5'-triphosphate nucleotidohydrolase from Buchnera aphidicola subsp. Baizongia pistaciae (strain Bp).